The chain runs to 364 residues: UDP-N-acetylglucosamine--N-acetylmuramyl-(pentapeptide) pyrophosphoryl-undecaprenol N-acetylglucosamine transferase (364 aa).

UDP-N-acetyl-alpha-D-glucosamine-binding positions include 10 to 12 (TGG), Asn124, Ser195, and Gln295.

This sequence belongs to the glycosyltransferase 28 family. MurG subfamily.

It is found in the cell membrane. The catalysed reaction is di-trans,octa-cis-undecaprenyl diphospho-N-acetyl-alpha-D-muramoyl-L-alanyl-D-glutamyl-meso-2,6-diaminopimeloyl-D-alanyl-D-alanine + UDP-N-acetyl-alpha-D-glucosamine = di-trans,octa-cis-undecaprenyl diphospho-[N-acetyl-alpha-D-glucosaminyl-(1-&gt;4)]-N-acetyl-alpha-D-muramoyl-L-alanyl-D-glutamyl-meso-2,6-diaminopimeloyl-D-alanyl-D-alanine + UDP + H(+). The protein operates within cell wall biogenesis; peptidoglycan biosynthesis. Cell wall formation. Catalyzes the transfer of a GlcNAc subunit on undecaprenyl-pyrophosphoryl-MurNAc-pentapeptide (lipid intermediate I) to form undecaprenyl-pyrophosphoryl-MurNAc-(pentapeptide)GlcNAc (lipid intermediate II). The chain is UDP-N-acetylglucosamine--N-acetylmuramyl-(pentapeptide) pyrophosphoryl-undecaprenol N-acetylglucosamine transferase from Bacillus pumilus (strain SAFR-032).